A 728-amino-acid chain; its full sequence is Protein psiK (728 aa).

Residues 1-20 (MKKTFIFLYCVVLFISTTLA) form the signal peptide. At 21 to 666 (VEMKKTQDFN…FICKTAAVVS (646 aa)) the chain is on the extracellular side. N-linked (GlcNAc...) asparagine glycans are attached at residues asparagine 61, asparagine 74, and asparagine 104. The region spanning 118–266 (MNLDDKSNYF…YDFCGVCTGN (149 aa)) is the PA14 domain. N-linked (GlcNAc...) asparagine glycosylation is found at asparagine 272, asparagine 326, asparagine 335, asparagine 438, asparagine 543, and asparagine 638. A helical membrane pass occupies residues 667–687 (VGVAVGVAVGGAIALGVFIFA). Residues 688–728 (GKKGYDYWKASQGVTMATSNANPLYESNPSGGENPIYTSPN) are Cytoplasmic-facing.

Belongs to the prespore-cell-inducing factor family.

It localises to the membrane. The protein is Protein psiK (psiK) of Dictyostelium discoideum (Social amoeba).